The sequence spans 529 residues: Delayed-rectifier potassium channel regulatory subunit KCNS1 (529 aa).

Topologically, residues 1-217 are cytoplasmic; the sequence is MLMLLVRGTH…LTMENPGYSL (217 aa). The chain crosses the membrane as a helical span at residues 218–239; it reads PSKLFSCVSISVVLASIAAMCI. The Extracellular segment spans residues 240–270; that stretch reads HSLPEYQAREAAAAVAAVAAGRSPEGVRDDP. A helical transmembrane segment spans residues 271–293; the sequence is VLRRLEYFCIAWFSFEVSSRLLL. Over 294–304 the chain is Cytoplasmic; it reads APSTRNFFCHP. A helical membrane pass occupies residues 305-322; sequence LNLIDIVSVLPFYLTLLA. Residues 323 to 340 lie on the Extracellular side of the membrane; the sequence is GVALGDQGGTGGKELGHL. A helical; Voltage-sensor transmembrane segment spans residues 341–361; sequence GKVVQVFRLMRIFRVLKLARH. Topologically, residues 362-376 are cytoplasmic; sequence STGLRSLGATLKHSY. The chain crosses the membrane as a helical span at residues 377-398; sequence REVGILLLYLAVGVSVFSGVAY. The Extracellular segment spans residues 399–411; the sequence is TAEKEEDVGFNTI. An intramembrane region (helical) is located at residues 412 to 423; that stretch reads PACWWWGTVSMT. A Selectivity filter motif is present at residues 424–429; sequence TVGYGD. Residues 424–431 lie within the membrane without spanning it; the sequence is TVGYGDVV. The Extracellular portion of the chain corresponds to 432 to 438; it reads PVTVAGK. Residues 439 to 467 form a helical membrane-spanning segment; that stretch reads LAASGCILGGILVVALPITIIFNKFSHFY. Topologically, residues 468–529 are cytoplasmic; it reads RRQKALEAAV…PSEPPHPQMY (62 aa). Positions 496-529 are disordered; that stretch reads SEASLETSRETSQEGRSADLETQAPSEPPHPQMY. The span at 502-514 shows a compositional bias: basic and acidic residues; that stretch reads TSRETSQEGRSAD.

This sequence belongs to the potassium channel family. S (TC 1.A.1.2) subfamily. Kv9.1/KCNS1 sub-subfamily. In terms of assembly, heterotetramer with KCNB1. Heterotetramer with KCNB2. Does not form homomultimers.

It is found in the cell membrane. In terms of biological role, potassium channel regulatory subunit that modulate the delayed rectifier voltage-gated potassium channel activity of KCNB1 and KCNB2 by altering their kinetics, expression levels, and shifting the half-inactivation potential to more polarized values. While it does not form functional channels on its own, it can form functional heterotetrameric channels with KCNB1 and KCNB2. Each regulatory subunit has unique regulatory properties that can lead to extensive inhibition, significant changes in kinetics, and/or substantial shifts in the voltage dependencies of the inactivation process. This Papio anubis (Olive baboon) protein is Delayed-rectifier potassium channel regulatory subunit KCNS1.